The sequence spans 523 residues: Probable methylmalonate-semialdehyde/malonate-semialdehyde dehydrogenase [acylating], mitochondrial (523 aa).

Residues 1–22 (MLSRLARVQPKCQQLAHFSTSK) constitute a mitochondrion transit peptide. Phenylalanine 175, lysine 199, and glutamate 202 together coordinate NAD(+). The Nucleophile role is filled by cysteine 307. Position 407 (glutamate 407) interacts with NAD(+).

Belongs to the aldehyde dehydrogenase family. Homodimer.

The protein localises to the mitochondrion. The catalysed reaction is 2-methyl-3-oxopropanoate + NAD(+) + CoA + H2O = propanoyl-CoA + hydrogencarbonate + NADH + H(+). The enzyme catalyses 3-oxopropanoate + NAD(+) + CoA + H2O = hydrogencarbonate + acetyl-CoA + NADH + H(+). In terms of biological role, probable malonate and methylmalonate semialdehyde dehydrogenase involved in the catabolism of valine, thymine, and compounds catabolized by way of beta-alanine, including uracil and cytidine. This is Probable methylmalonate-semialdehyde/malonate-semialdehyde dehydrogenase [acylating], mitochondrial (alh-8) from Caenorhabditis elegans.